We begin with the raw amino-acid sequence, 430 residues long: Tektin-2 (430 aa).

Coiled coils occupy residues 75-162 (KEML…FQHL) and 226-380 (KNRA…IACK).

Belongs to the tektin family. As to quaternary structure, microtubule inner protein component of sperm flagellar doublet microtubules. May interact with CCDC172. Post-translationally, tyrosine phosphorylated. In terms of processing, ubiquitinated, leading to its degradation. Deubiquitinated by USP16, promoting its stability.

The protein resides in the cytoplasm. It is found in the cytoskeleton. It localises to the cilium axoneme. The protein localises to the flagellum axoneme. Its subcellular location is the microtubule organizing center. Microtubule inner protein (MIP) part of the dynein-decorated doublet microtubules (DMTs) in cilia and flagellar axoneme. Plays a key role in the assembly or attachment of the inner dynein arm to microtubules in sperm flagella and tracheal cilia. Forms filamentous polymers in the walls of ciliary and flagellar microtubules. In Rattus norvegicus (Rat), this protein is Tektin-2 (Tekt2).